Reading from the N-terminus, the 486-residue chain is CUGBP Elav-like family member 1 (486 aa).

At M1 the chain carries N-acetylmethionine. T4 bears the Phosphothreonine mark. 2 consecutive RRM domains span residues 16 to 99 (IKMF…PADS) and 108 to 188 (RKLF…FADT). A Glycyl lysine isopeptide (Lys-Gly) (interchain with G-Cter in SUMO2) cross-link involves residue K109. Residues S179 and S302 each carry the phosphoserine modification. Residues 277-309 (TPSGTNALTTSSSPLSVLTSSGSSPSSSSSNSV) form a disordered region. Positions 284–309 (LTTSSSPLSVLTSSGSSPSSSSSNSV) are enriched in low complexity. Residues 401-479 (ANLFIYHLPQ…KRLKVQLKRS (79 aa)) enclose the RRM 3 domain.

This sequence belongs to the CELF/BRUNOL family. Component of an EIF2 complex at least composed of CELF1/CUGBP1, CALR, CALR3, EIF2S1, EIF2S2, HSP90B1 and HSPA5. Associates with polysomes. Interacts with HNRNPH1; the interaction in RNA-dependent. Interacts with PARN. Phosphorylated. Its phosphorylation status increases in senescent cells. As to expression, ubiquitous.

It localises to the nucleus. Its subcellular location is the cytoplasm. Functionally, RNA-binding protein implicated in the regulation of several post-transcriptional events. Involved in pre-mRNA alternative splicing, mRNA translation and stability. Mediates exon inclusion and/or exclusion in pre-mRNA that are subject to tissue-specific and developmentally regulated alternative splicing. Specifically activates exon 5 inclusion of cardiac isoforms of TNNT2 during heart remodeling at the juvenile to adult transition. Acts both as an activator and as a repressor of a pair of coregulated exons: promotes inclusion of the smooth muscle (SM) exon but exclusion of the non-muscle (NM) exon in actinin pre-mRNAs. Activates SM exon 5 inclusion by antagonizing the repressive effect of PTB. Promotes exclusion of exon 11 of the INSR pre-mRNA. Inhibits, together with HNRNPH1, insulin receptor (IR) pre-mRNA exon 11 inclusion in myoblast. Increases translation and controls the choice of translation initiation codon of CEBPB mRNA. Increases mRNA translation of CEBPB in aging liver. Increases translation of CDKN1A mRNA by antagonizing the repressive effect of CALR3. Mediates rapid cytoplasmic mRNA deadenylation. Recruits the deadenylase PARN to the poly(A) tail of EDEN-containing mRNAs to promote their deadenylation. Required for completion of spermatogenesis. Binds to (CUG)n triplet repeats in the 3'-UTR of transcripts such as DMPK and to Bruno response elements (BREs). Binds to muscle-specific splicing enhancer (MSE) intronic sites flanking the alternative exon 5 of TNNT2 pre-mRNA. Binds to AU-rich sequences (AREs or EDEN-like) localized in the 3'-UTR of JUN and FOS mRNAs. Binds to the IR RNA. Binds to the 5'-region of CDKN1A and CEBPB mRNAs. Binds with the 5'-region of CEBPB mRNA in aging liver. May be a specific regulator of miRNA biogenesis. Binds to primary microRNA pri-MIR140 and, with CELF2, negatively regulates the processing to mature miRNA. The polypeptide is CUGBP Elav-like family member 1 (CELF1) (Homo sapiens (Human)).